The chain runs to 869 residues: Bifunctional uridylyltransferase/uridylyl-removing enzyme (869 aa).

A uridylyltransferase region spans residues 1-331 (MPTNLPALPM…FPSESQVTRV (331 aa)). The uridylyl-removing stretch occupies residues 332-688 (INERFVERQG…ARISPAGEGL (357 aa)). The HD domain maps to 450–572 (VDQHILMVVR…VGDERHLTAL (123 aa)). 2 ACT domains span residues 689–773 (QVAV…PSQG) and 800–869 (LLSL…ALEI).

The protein belongs to the GlnD family. Mg(2+) is required as a cofactor.

The catalysed reaction is [protein-PII]-L-tyrosine + UTP = [protein-PII]-uridylyl-L-tyrosine + diphosphate. The enzyme catalyses [protein-PII]-uridylyl-L-tyrosine + H2O = [protein-PII]-L-tyrosine + UMP + H(+). With respect to regulation, uridylyltransferase (UTase) activity is inhibited by glutamine, while glutamine activates uridylyl-removing (UR) activity. Its function is as follows. Modifies, by uridylylation and deuridylylation, the PII regulatory proteins (GlnB and homologs), in response to the nitrogen status of the cell that GlnD senses through the glutamine level. Under low glutamine levels, catalyzes the conversion of the PII proteins and UTP to PII-UMP and PPi, while under higher glutamine levels, GlnD hydrolyzes PII-UMP to PII and UMP (deuridylylation). Thus, controls uridylylation state and activity of the PII proteins, and plays an important role in the regulation of nitrogen assimilation and metabolism. This chain is Bifunctional uridylyltransferase/uridylyl-removing enzyme, found in Cupriavidus pinatubonensis (strain JMP 134 / LMG 1197) (Cupriavidus necator (strain JMP 134)).